Consider the following 276-residue polypeptide: Pyrroline-5-carboxylate reductase (276 aa).

The protein belongs to the pyrroline-5-carboxylate reductase family.

It localises to the cytoplasm. It catalyses the reaction L-proline + NADP(+) = (S)-1-pyrroline-5-carboxylate + NADPH + 2 H(+). The catalysed reaction is L-proline + NAD(+) = (S)-1-pyrroline-5-carboxylate + NADH + 2 H(+). The protein operates within amino-acid biosynthesis; L-proline biosynthesis; L-proline from L-glutamate 5-semialdehyde: step 1/1. In Arabidopsis thaliana (Mouse-ear cress), this protein is Pyrroline-5-carboxylate reductase (PROC1).